Consider the following 356-residue polypeptide: Glucose-1-phosphate thymidylyltransferase (356 aa).

Mg(2+) contacts are provided by aspartate 107 and aspartate 221.

This sequence belongs to the glucose-1-phosphate thymidylyltransferase family. The cofactor is Mg(2+).

It carries out the reaction dTTP + alpha-D-glucose 1-phosphate + H(+) = dTDP-alpha-D-glucose + diphosphate. It functions in the pathway antibiotic biosynthesis. Functionally, involved in the biosynthesis of the two 2,6-deoxysugars, dTDP-L-oleandrose and dTDP-D-desosamine, attached to the macrolactone ring oleandolide to produce the aglycone antibiotic oleandomycin. Catalyzes the formation of dTDP-glucose from deoxythymidine triphosphate (dTTP) and glucose 1-phosphate. In Streptomyces antibioticus, this protein is Glucose-1-phosphate thymidylyltransferase.